A 118-amino-acid chain; its full sequence is Heavy metal-associated isoprenylated plant protein 12 (118 aa).

Residues 1 to 65 form the HMA domain; that stretch reads MQVVVLKLDV…KICHTEFISV (65 aa). The segment at 68 to 87 is disordered; the sequence is VKEPEKKKPDDPKKPETKPP. Basic and acidic residues predominate over residues 69–86; that stretch reads KEPEKKKPDDPKKPETKP. At Cys115 the chain carries Cysteine methyl ester. Cys115 is lipidated: S-farnesyl cysteine. Residues 116-118 constitute a propeptide, removed in mature form; that stretch reads VTS.

This sequence belongs to the HIPP family.

Its function is as follows. Probable heavy-metal-binding protein. The chain is Heavy metal-associated isoprenylated plant protein 12 from Arabidopsis thaliana (Mouse-ear cress).